Here is a 188-residue protein sequence, read N- to C-terminus: uncharacterized protein (188 aa).

The segment at 57–80 (NDDVAPVAEGPKQERRSPSRNIGR) is disordered.

This sequence belongs to the transposase 25 family.

This is an uncharacterized protein from Sinorhizobium fredii (strain NBRC 101917 / NGR234).